The primary structure comprises 429 residues: Glutamate-1-semialdehyde 2,1-aminomutase 2 (429 aa).

N6-(pyridoxal phosphate)lysine is present on lysine 268.

This sequence belongs to the class-III pyridoxal-phosphate-dependent aminotransferase family. HemL subfamily. Homodimer. Pyridoxal 5'-phosphate is required as a cofactor.

It is found in the cytoplasm. It catalyses the reaction (S)-4-amino-5-oxopentanoate = 5-aminolevulinate. It functions in the pathway porphyrin-containing compound metabolism; protoporphyrin-IX biosynthesis; 5-aminolevulinate from L-glutamyl-tRNA(Glu): step 2/2. The chain is Glutamate-1-semialdehyde 2,1-aminomutase 2 from Staphylococcus aureus (strain USA300).